The primary structure comprises 498 residues: Putrescine N-hydroxylase (498 aa).

The FAD site is built by F23, D43, K45, W50, H51, and Q62. NADP(+)-binding residues include Q62 and R104. Residue V127 coordinates FAD. NADP(+)-binding residues include S207, R231, Y275, and L309. N386, P397, and L399 together coordinate FAD. Residues 443–474 show a composition bias toward polar residues; sequence LESNTHSAVTPSKTRQGLNPSAKSVQQPSIEP. A disordered region spans residues 443–498; it reads LESNTHSAVTPSKTRQGLNPSAKSVQQPSIEPQTALRIAPTGGNVSALMAPNKEAQ.

This sequence belongs to the lysine N(6)-hydroxylase/L-ornithine N(5)-oxygenase family. The cofactor is FAD.

The catalysed reaction is putrescine + NADPH + O2 = N-hydroxyputrescine + NADP(+) + H2O. It participates in siderophore biosynthesis. In terms of biological role, N-hydroxylating monooxygenase involved in the biosynthesis of the siderophore putrebactin. Catalyzes the N-hydroxylation of the aliphatic diamine putrescine into N-hydroxyputrescine (NHP). The chain is Putrescine N-hydroxylase from Shewanella oneidensis (strain ATCC 700550 / JCM 31522 / CIP 106686 / LMG 19005 / NCIMB 14063 / MR-1).